Consider the following 535-residue polypeptide: CTP synthase (535 aa).

The amidoligase domain stretch occupies residues 1–267; sequence MTKYIFVTGG…DQIVCDHLKL (267 aa). Residue serine 13 participates in CTP binding. Residue serine 13 participates in UTP binding. 14–19 contacts ATP; it reads SLGKGI. Tyrosine 54 provides a ligand contact to L-glutamine. Aspartate 71 lines the ATP pocket. Residues aspartate 71 and glutamate 141 each contribute to the Mg(2+) site. CTP is bound by residues 148 to 150, 188 to 193, and lysine 224; these read DIE and KTKPTQ. UTP-binding positions include 188–193 and lysine 224; that span reads KTKPTQ. 240–242 is a binding site for ATP; the sequence is RDA. A Glutamine amidotransferase type-1 domain is found at 292-534; sequence KIALVGKYVE…VKASITNKES (243 aa). Glycine 354 serves as a coordination point for L-glutamine. The active-site Nucleophile; for glutamine hydrolysis is cysteine 381. L-glutamine contacts are provided by residues 382-385, glutamate 405, and arginine 462; that span reads LGMQ. Residues histidine 507 and glutamate 509 contribute to the active site.

This sequence belongs to the CTP synthase family. Homotetramer.

The enzyme catalyses UTP + L-glutamine + ATP + H2O = CTP + L-glutamate + ADP + phosphate + 2 H(+). The catalysed reaction is L-glutamine + H2O = L-glutamate + NH4(+). It catalyses the reaction UTP + NH4(+) + ATP = CTP + ADP + phosphate + 2 H(+). The protein operates within pyrimidine metabolism; CTP biosynthesis via de novo pathway; CTP from UDP: step 2/2. Allosterically activated by GTP, when glutamine is the substrate; GTP has no effect on the reaction when ammonia is the substrate. The allosteric effector GTP functions by stabilizing the protein conformation that binds the tetrahedral intermediate(s) formed during glutamine hydrolysis. Inhibited by the product CTP, via allosteric rather than competitive inhibition. Catalyzes the ATP-dependent amination of UTP to CTP with either L-glutamine or ammonia as the source of nitrogen. Regulates intracellular CTP levels through interactions with the four ribonucleotide triphosphates. The polypeptide is CTP synthase (Bacillus thuringiensis subsp. konkukian (strain 97-27)).